The following is a 377-amino-acid chain: Alanine racemase (377 aa).

Residue K37 is the Proton acceptor; specific for D-alanine of the active site. The residue at position 37 (K37) is an N6-(pyridoxal phosphate)lysine. R135 lines the substrate pocket. Y271 serves as the catalytic Proton acceptor; specific for L-alanine. M319 contacts substrate.

The protein belongs to the alanine racemase family. Pyridoxal 5'-phosphate is required as a cofactor.

The catalysed reaction is L-alanine = D-alanine. The protein operates within amino-acid biosynthesis; D-alanine biosynthesis; D-alanine from L-alanine: step 1/1. Functionally, catalyzes the interconversion of L-alanine and D-alanine. May also act on other amino acids. The polypeptide is Alanine racemase (alr) (Helicobacter pylori (strain P12)).